Reading from the N-terminus, the 909-residue chain is Phosphoenolpyruvate carboxylase (909 aa).

Residues histidine 138 and lysine 572 contribute to the active site.

It belongs to the PEPCase type 1 family. Requires Mg(2+) as cofactor.

The enzyme catalyses oxaloacetate + phosphate = phosphoenolpyruvate + hydrogencarbonate. In terms of biological role, forms oxaloacetate, a four-carbon dicarboxylic acid source for the tricarboxylic acid cycle. The polypeptide is Phosphoenolpyruvate carboxylase (Lactobacillus delbrueckii subsp. bulgaricus (strain ATCC 11842 / DSM 20081 / BCRC 10696 / JCM 1002 / NBRC 13953 / NCIMB 11778 / NCTC 12712 / WDCM 00102 / Lb 14)).